The sequence spans 247 residues: Cytochrome c oxidase subunit 2 (247 aa).

At Met1–Asn38 the chain is on the mitochondrial intermembrane side. Residues Val39 to Leu58 form a helical membrane-spanning segment. At Thr59 to Glu78 the chain is on the mitochondrial matrix side. A helical membrane pass occupies residues Met79–Cys103. Topologically, residues Asp104–Gln247 are mitochondrial intermembrane. Cu cation contacts are provided by His182, Cys217, Glu219, Cys221, His225, and Met228. A Mg(2+)-binding site is contributed by Glu219.

This sequence belongs to the cytochrome c oxidase subunit 2 family. Component of the cytochrome c oxidase (complex IV, CIV), a multisubunit enzyme composed of a catalytic core of 3 subunits and several supernumerary subunits. The complex exists as a monomer or a dimer and forms supercomplexes (SCs) in the inner mitochondrial membrane with ubiquinol-cytochrome c oxidoreductase (cytochrome b-c1 complex, complex III, CIII). The cofactor is Cu cation.

It is found in the mitochondrion inner membrane. The enzyme catalyses 4 Fe(II)-[cytochrome c] + O2 + 8 H(+)(in) = 4 Fe(III)-[cytochrome c] + 2 H2O + 4 H(+)(out). In terms of biological role, component of the cytochrome c oxidase, the last enzyme in the mitochondrial electron transport chain which drives oxidative phosphorylation. The respiratory chain contains 3 multisubunit complexes succinate dehydrogenase (complex II, CII), ubiquinol-cytochrome c oxidoreductase (cytochrome b-c1 complex, complex III, CIII) and cytochrome c oxidase (complex IV, CIV), that cooperate to transfer electrons derived from NADH and succinate to molecular oxygen, creating an electrochemical gradient over the inner membrane that drives transmembrane transport and the ATP synthase. Cytochrome c oxidase is the component of the respiratory chain that catalyzes the reduction of oxygen to water. Electrons originating from reduced cytochrome c in the intermembrane space (IMS) are transferred via the dinuclear copper A center (CU(A)) of subunit 2 and heme A of subunit 1 to the active site in subunit 1, a binuclear center (BNC) formed by heme A3 and copper B (CU(B)). The BNC reduces molecular oxygen to 2 water molecules using 4 electrons from cytochrome c in the IMS and 4 protons from the mitochondrial matrix. This chain is Cytochrome c oxidase subunit 2 (COX2), found in Brettanomyces custersianus (Yeast).